A 686-amino-acid chain; its full sequence is Pentatricopeptide repeat-containing protein At4g08210 (686 aa).

PPR repeat units follow at residues 4 to 38, 39 to 69, 70 to 104, 106 to 140, 141 to 171, 172 to 206, 207 to 236, 237 to 271, 272 to 302, 306 to 340, 341 to 375, 376 to 406, 407 to 441, 442 to 476, 477 to 507, 508 to 542, 543 to 573, and 579 to 609; these read DLKL…GISQ, NVFI…MSER, NIVT…EEEA, NEFM…NLRG, DVVL…ILRP, SSTS…NVVS, WNCL…GLVL, DGFA…GLES, SPFA…EKLA, SVAV…DLCF, DSYT…GYEL, DYIV…LPNK, DIIA…GLDA, DQFI…GYES, EPVT…MLER, DVVS…GIEP, NKVT…MKSE, and YLEH…MPLE. The type E motif; degenerate stretch occupies residues 614-686; it reads IWTSLLTACG…AKESGMSWII (73 aa).

Belongs to the PPR family. PCMP-E subfamily.

This chain is Pentatricopeptide repeat-containing protein At4g08210 (PCMP-E100), found in Arabidopsis thaliana (Mouse-ear cress).